The primary structure comprises 147 residues: uncharacterized protein (147 aa).

Over 1 to 16 the chain is Extracellular; sequence MDHRAAFGYFSNACFK. Residues 17–37 form a helical membrane-spanning segment; the sequence is VMLFSSLLASFASSVAFISLI. Over 38–105 the chain is Cytoplasmic; it reads TFSLSSSESP…FEAAFFLLTN (68 aa). A helical membrane pass occupies residues 106 to 126; the sequence is EMIFFILYYFFSCLMFFYVAS. Over 127–147 the chain is Extracellular; that stretch reads ERNTNPKILQTINTKPLYIKN.

It is found in the membrane. This is an uncharacterized protein from Saccharomyces cerevisiae (strain ATCC 204508 / S288c) (Baker's yeast).